Here is a 291-residue protein sequence, read N- to C-terminus: BTB/POZ domain-containing protein 19 (291 aa).

The region spanning 29–98 (SDVCFVVGQE…LYTNSVKLYR (70 aa)) is the BTB domain. The BACK domain occupies 134-234 (CEALQVAVTF…LALLAPAELS (101 aa)).

This chain is BTB/POZ domain-containing protein 19 (BTBD19), found in Homo sapiens (Human).